Consider the following 321-residue polypeptide: Probable pectate lyase A (321 aa).

A signal peptide spans 1–18 (MKFVATLIACGLSGLALA). Asparagine 93 carries an N-linked (GlcNAc...) asparagine glycan. Residues aspartate 134, aspartate 163, and aspartate 167 each coordinate Ca(2+). The active site involves arginine 220. N-linked (GlcNAc...) asparagine glycosylation occurs at asparagine 238.

Belongs to the polysaccharide lyase 1 family. Ca(2+) is required as a cofactor.

The protein localises to the secreted. The enzyme catalyses Eliminative cleavage of (1-&gt;4)-alpha-D-galacturonan to give oligosaccharides with 4-deoxy-alpha-D-galact-4-enuronosyl groups at their non-reducing ends.. In terms of biological role, pectinolytic enzyme consist of four classes of enzymes: pectin lyase, polygalacturonase, pectin methylesterase and rhamnogalacturonase. Among pectinolytic enzymes, pectin lyase is the most important in depolymerization of pectin, since it cleaves internal glycosidic bonds of highly methylated pectins. Favors pectate, the anion, over pectin, the methyl ester. This is Probable pectate lyase A (plyA) from Aspergillus fumigatus (strain CBS 144.89 / FGSC A1163 / CEA10) (Neosartorya fumigata).